The chain runs to 75 residues: METTVFLSNRSQAVRLPKAVALPENVKRVEVIAVGRTRIITPAGETWDEWFDGNSVSADFMDNREQPGMQERESF.

Positions 3-45 (TTVFLSNRSQAVRLPKAVALPENVKRVEVIAVGRTRIITPAGE) constitute a SpoVT-AbrB domain.

It belongs to the VapB family.

This is an uncharacterized protein from Escherichia coli (strain K12).